The primary structure comprises 294 residues: Shikimate dehydrogenase (NADP(+)) (294 aa).

Shikimate-binding positions include 23-25 (SRS) and Thr70. Lys74 functions as the Proton acceptor in the catalytic mechanism. Asn95 and Asp110 together coordinate shikimate. NADP(+) is bound by residues 135 to 139 (GAGGA), 159 to 164 (NRTASR), and Met232. Tyr234 contacts shikimate. Gly255 serves as a coordination point for NADP(+).

This sequence belongs to the shikimate dehydrogenase family. As to quaternary structure, homodimer.

It catalyses the reaction shikimate + NADP(+) = 3-dehydroshikimate + NADPH + H(+). It functions in the pathway metabolic intermediate biosynthesis; chorismate biosynthesis; chorismate from D-erythrose 4-phosphate and phosphoenolpyruvate: step 4/7. Functionally, involved in the biosynthesis of the chorismate, which leads to the biosynthesis of aromatic amino acids. Catalyzes the reversible NADPH linked reduction of 3-dehydroshikimate (DHSA) to yield shikimate (SA). The chain is Shikimate dehydrogenase (NADP(+)) from Cupriavidus pinatubonensis (strain JMP 134 / LMG 1197) (Cupriavidus necator (strain JMP 134)).